We begin with the raw amino-acid sequence, 230 residues long: Leucyl/phenylalanyl-tRNA--protein transferase (230 aa).

It belongs to the L/F-transferase family.

The protein resides in the cytoplasm. The enzyme catalyses N-terminal L-lysyl-[protein] + L-leucyl-tRNA(Leu) = N-terminal L-leucyl-L-lysyl-[protein] + tRNA(Leu) + H(+). The catalysed reaction is N-terminal L-arginyl-[protein] + L-leucyl-tRNA(Leu) = N-terminal L-leucyl-L-arginyl-[protein] + tRNA(Leu) + H(+). It carries out the reaction L-phenylalanyl-tRNA(Phe) + an N-terminal L-alpha-aminoacyl-[protein] = an N-terminal L-phenylalanyl-L-alpha-aminoacyl-[protein] + tRNA(Phe). Functions in the N-end rule pathway of protein degradation where it conjugates Leu, Phe and, less efficiently, Met from aminoacyl-tRNAs to the N-termini of proteins containing an N-terminal arginine or lysine. This chain is Leucyl/phenylalanyl-tRNA--protein transferase, found in Hamiltonella defensa subsp. Acyrthosiphon pisum (strain 5AT).